The sequence spans 414 residues: MSGIIATYLIHDDSHNLEKKAEQIALGLTIGSWTHLPHLLQEQLKQHKGNVIHVEELAEHEHTNSYLRKKVKRGIIKIEYPLLNFSPDLPAILTTTFGKLSLDGEVKLIDLTFSDELKKHFPGPKFGIDGIRNLLQVHDRPLLMSIFKGMIGRNIGYLKTQLRDQAIGGVDIVKDDEILFENALTPLTKRIVSGKEVLQSVYETYGHKTLYAVNLTGRTFDLKENAKRAVQAGADILLFNVFSYGLDVLQSLAEDDEIPVPIMAHPAVSGAYSASKLYGVSSPLLLGKLLRYAGADFSLFPSPYGSVALEKEEALAISKYLTEDDAFFKKSFSVPSAGIHPGFVPFIARDFGKDVVINAGGGIHGHPNGAQGGGKAFRAAIDATLQNKPLHEVDDINLHSALQIWGNPSHEVKL.

Lys-99 (proton acceptor) is an active-site residue. Residues Lys-148, 174-177 (KDDE), His-265, Gly-338, and 360-361 (GG) each bind substrate. Residues Lys-174, Asp-176, and Glu-177 each coordinate Mg(2+). Lys-174 carries the post-translational modification N6-carboxylysine.

This sequence belongs to the RuBisCO large chain family. Type IV subfamily. Homodimer. Mg(2+) serves as cofactor.

The catalysed reaction is 5-methylsulfanyl-2,3-dioxopentyl phosphate = 2-hydroxy-5-methylsulfanyl-3-oxopent-1-enyl phosphate. The protein operates within amino-acid biosynthesis; L-methionine biosynthesis via salvage pathway; L-methionine from S-methyl-5-thio-alpha-D-ribose 1-phosphate: step 3/6. Functionally, catalyzes the enolization of 2,3-diketo-5-methylthiopentyl-1-phosphate (DK-MTP-1-P) into 2-hydroxy-3-keto-5-methylthiopentenyl-1-phosphate (HK-MTPenyl-1-P). The sequence is that of 2,3-diketo-5-methylthiopentyl-1-phosphate enolase from Bacillus cereus (strain Q1).